Consider the following 262-residue polypeptide: Virulence regulon transcriptional activator VirF (262 aa).

The 98-residue stretch at Asp-161–Tyr-258 folds into the HTH araC/xylS-type domain. 2 consecutive DNA-binding regions (H-T-H motif) follow at residues Ser-178–Lys-199 and Ile-225–Tyr-248.

In terms of assembly, homodimer.

Primary regulator of plasmid-encoded virulence genes. Activates the transcription of icsA (virG) and of virB, which is an activator of the ipaABCD virulence regulon. This Shigella dysenteriae protein is Virulence regulon transcriptional activator VirF (virF).